The following is a 516-amino-acid chain: L-amino-acid oxidase (516 aa).

The N-terminal stretch at 1 to 18 (MNVFFMFSLLFLAALGSC) is a signal peptide. Cys-28 and Cys-189 are disulfide-bonded. FAD contacts are provided by residues 61–62 (MA), 81–82 (EA), Arg-89, and 103–106 (GPMR). Positions 106 and 239 each coordinate substrate. Val-279 contacts FAD. An intrachain disulfide couples Cys-349 to Cys-430. Asn-379 carries N-linked (GlcNAc...) asparagine glycosylation. Substrate is bound at residue Tyr-390. Residues Glu-475 and 482–487 (GWIDST) each bind FAD. 482 to 483 (GW) is a substrate binding site.

The protein belongs to the flavin monoamine oxidase family. FIG1 subfamily. Homodimer; non-covalently linked. Requires FAD as cofactor. N-glycosylated. Expressed by the venom gland.

It is found in the secreted. It carries out the reaction an L-alpha-amino acid + O2 + H2O = a 2-oxocarboxylate + H2O2 + NH4(+). The catalysed reaction is L-leucine + O2 + H2O = 4-methyl-2-oxopentanoate + H2O2 + NH4(+). It catalyses the reaction L-phenylalanine + O2 + H2O = 3-phenylpyruvate + H2O2 + NH4(+). The enzyme catalyses L-methionine + O2 + H2O = 4-methylsulfanyl-2-oxobutanoate + H2O2 + NH4(+). It carries out the reaction L-arginine + O2 + H2O = 5-guanidino-2-oxopentanoate + H2O2 + NH4(+). Catalyzes an oxidative deamination of predominantly hydrophobic and aromatic L-amino acids, thus producing hydrogen peroxide that may contribute to the diverse toxic effects of this enzyme. Is active on L-Arg, L-Phe, L-Met, and L-Leu and is weakly active on L-Val. Exhibits diverse biological activities, such as hemorrhage, hemolysis, edema, apoptosis of vascular endothelial cells or tumor cell lines, antibacterial and antiparasitic activities, as well as regulation of platelet aggregation. Its effect on platelets is controversial, since it either induces aggregation or inhibits agonist-induced aggregation. These different effects are probably due to different experimental conditions. This chain is L-amino-acid oxidase, found in Crotalus adamanteus (Eastern diamondback rattlesnake).